A 231-amino-acid polypeptide reads, in one-letter code: MAKKKAFISLLYLASIVFLPWWISLSFTFNKSLESWVNNWWNTRPSEILLNDIQEKSILKKFIELEELSLFDEMLKEYSERRLQKLHVGVYNETIQWIKMHNEGRIHTILHFSTNIISFVILSVFSILSNEELIFLNSCLQEFLYNLSDTIKAFSILLLTDLCIGFHSPHGWELMIGSIYKDFGFAHNDQIISGVVSTFPVILDTIFKYWIFRYLNRVSPSLVVIYHSMND.

4 helical membrane passes run 7 to 27 (FISLLYLASIVFLPWWISLSF), 116 to 136 (IISFVILSVFSILSNEELIFL), 156 to 176 (ILLLTDLCIGFHSPHGWELMI), and 191 to 211 (IISGVVSTFPVILDTIFKYWI).

Belongs to the CemA family.

The protein localises to the plastid. It is found in the chloroplast inner membrane. It carries out the reaction K(+)(in) + H(+)(out) = K(+)(out) + H(+)(in). Its function is as follows. Contributes to K(+)/H(+) antiport activity by supporting proton efflux to control proton extrusion and homeostasis in chloroplasts in a light-dependent manner to modulate photosynthesis. Prevents excessive induction of non-photochemical quenching (NPQ) under continuous-light conditions. Indirectly promotes efficient inorganic carbon uptake into chloroplasts. The protein is Potassium/proton antiporter CemA of Morus indica (Mulberry).